The chain runs to 199 residues: Recombination protein RecR (199 aa).

The segment at 56-71 (CQRCNTFTEGDICERC) adopts a C4-type zinc-finger fold. The Toprim domain occupies 79–174 (ELLCVVETPV…GVTRIARGVP (96 aa)).

Belongs to the RecR family.

Its function is as follows. May play a role in DNA repair. It seems to be involved in an RecBC-independent recombinational process of DNA repair. It may act with RecF and RecO. In Dechloromonas aromatica (strain RCB), this protein is Recombination protein RecR.